We begin with the raw amino-acid sequence, 143 residues long: Peptide methionine sulfoxide reductase MsrB (143 aa).

Positions 16–139 (DAELRRRLTP…NSAALNFESR (124 aa)) constitute a MsrB domain. C55, C58, C104, and C107 together coordinate Zn(2+). The Nucleophile role is filled by C128.

Belongs to the MsrB Met sulfoxide reductase family. The cofactor is Zn(2+).

The catalysed reaction is L-methionyl-[protein] + [thioredoxin]-disulfide + H2O = L-methionyl-(R)-S-oxide-[protein] + [thioredoxin]-dithiol. The sequence is that of Peptide methionine sulfoxide reductase MsrB from Burkholderia lata (strain ATCC 17760 / DSM 23089 / LMG 22485 / NCIMB 9086 / R18194 / 383).